Here is a 3114-residue protein sequence, read N- to C-terminus: MSWALEEWKEGLPTRALQKIQELEGQLDKLKKEKQQRQFQLDSLEAALQKQKQKVENEKTEGTNLKRENQRLMEICESLEKTKQKISHELQVKESQVNFQEGQLNSGKKQIEKLEQELKRCKSELERSQQAAQSADVSLNPCNTPQKIFTTPLTPSQYYSGSKYEDLKEKYNKEVEERKRLEAEVKALQAKKASQTLPQATMNHRDIARHQASSSVFSWQQEKTPSHLSSNSQRTPIRRDFSASYFSGEQEVTPSRSTLQIGKRDANSSFFDNSSSPHLLDQLKAQNQELRNKINELELRLQGHEKEMKGQVNKFQELQLQLEKAKVELIEKEKVLNKCRDELVRTTAQYDQASTKYTALEQKLKKLTEDLSCQRQNAESARCSLEQKIKEKEKEFQEELSRQQRSFQTLDQECIQMKARLTQELQQAKNMHNVLQAELDKLTSVKQQLENNLEEFKQKLCRAEQAFQASQIKENELRRSMEEMKKENNLLKSHSEQKAREVCHLEAELKNIKQCLNQSQNFAEEMKAKNTSQETMLRDLQEKINQQENSLTLEKLKLAVADLEKQRDCSQDLLKKREHHIEQLNDKLSKTEKESKALLSALELKKKEYEELKEEKTLFSCWKSENEKLLTQMESEKENLQSKINHLETCLKTQQIKSHEYNERVRTLEMDRENLSVEIRNLHNVLDSKSVEVETQKLAYMELQQKAEFSDQKHQKEIENMCLKTSQLTGQVEDLEHKLQLLSNEIMDKDRCYQDLHAEYESLRDLLKSKDASLVTNEDHQRSLLAFDQQPAMHHSFANIIGEQGSMPSERSECRLEADQSPKNSAILQNRVDSLEFSLESQKQMNSDLQKQCEELVQIKGEIEENLMKAEQMHQSFVAETSQRISKLQEDTSAHQNVVAETLSALENKEKELQLLNDKVETEQAEIQELKKSNHLLEDSLKELQLLSETLSLEKKEMSSIISLNKREIEELTQENGTLKEINASLNQEKMNLIQKSESFANYIDEREKSISELSDQYKQEKLILLQRCEETGNAYEDLSQKYKAAQEKNSKLECLLNECTSLCENRKNELEQLKEAFAKEHQEFLTKLAFAEERNQNLMLELETVQQALRSEMTDNQNNSKSEAGGLKQEIMTLKEEQNKMQKEVNDLLQENEQLMKVMKTKHECQNLESEPIRNSVKERESERNQCNFKPQMDLEVKEISLDSYNAQLVQLEAMLRNKELKLQESEKEKECLQHELQTIRGDLETSNLQDMQSQEISGLKDCEIDAEEKYISGPHELSTSQNDNAHLQCSLQTTMNKLNELEKICEILQAEKYELVTELNDSRSECITATRKMAEEVGKLLNEVKILNDDSGLLHGELVEDIPGGEFGEQPNEQHPVSLAPLDESNSYEHLTLSDKEVQMHFAELQEKFLSLQSEHKILHDQHCQMSSKMSELQTYVDSLKAENLVLSTNLRNFQGDLVKEMQLGLEEGLVPSLSSSCVPDSSSLSSLGDSSFYRALLEQTGDMSLLSNLEGAVSANQCSVDEVFCSSLQEENLTRKETPSAPAKGVEELESLCEVYRQSLEKLEEKMESQGIMKNKEIQELEQLLSSERQELDCLRKQYLSENEQWQQKLTSVTLEMESKLAAEKKQTEQLSLELEVARLQLQGLDLSSRSLLGIDTEDAIQGRNESCDISKEHTSETTERTPKHDVHQICDKDAQQDLNLDIEKITETGAVKPTGECSGEQSPDTNYEPPGEDKTQGSSECISELSFSGPNALVPMDFLGNQEDIHNLQLRVKETSNENLRLLHVIEDRDRKVESLLNEMKELDSKLHLQEVQLMTKIEACIELEKIVGELKKENSDLSEKLEYFSCDHQELLQRVETSEGLNSDLEMHADKSSREDIGDNVAKVNDSWKERFLDVENELSRIRSEKASIEHEALYLEADLEVVQTEKLCLEKDNENKQKVIVCLEEELSVVTSERNQLRGELDTMSKKTTALDQLSEKMKEKTQELESHQSECLHCIQVAEAEVKEKTELLQTLSSDVSELLKDKTHLQEKLQSLEKDSQALSLTKCELENQIAQLNKEKELLVKESESLQARLSESDYEKLNVSKALEAALVEKGEFALRLSSTQEEVHQLRRGIEKLRVRIEADEKKQLHIAEKLKERERENDSLKDKVENLERELQMSEENQELVILDAENSKAEVETLKTQIEEMARSLKVFELDLVTLRSEKENLTKQIQEKQGQLSELDKLLSSFKSLLEEKEQAEIQIKEESKTAVEMLQNQLKELNEAVAALCGDQEIMKATEQSLDPPIEEEHQLRNSIEKLRARLEADEKKQLCVLQQLKESEHHADLLKGRVENLERELEIARTNQEHAALEAENSKGEVETLKAKIEGMTQSLRGLELDVVTIRSEKENLTNELQKEQERISELEIINSSFENILQEKEQEKVQMKEKSSTAMEMLQTQLKELNERVAALHNDQEACKAKEQNLSSQVECLELEKAQLLQGLDEAKNNYIVLQSSVNGLIQEVEDGKQKLEKKDEEISRLKNQIQDQEQLVSKLSQVEGEHQLWKEQNLELRNLTVELEQKIQVLQSKNASLQDTLEVLQSSYKNLENELELTKMDKMSFVEKVNKMTAKETELQREMHEMAQKTAELQEELSGEKNRLAGELQLLLEEIKSSKDQLKELTLENSELKKSLDCMHKDQVEKEGKVREEIAEYQLRLHEAEKKHQALLLDTNKQYEVEIQTYREKLTSKEECLSSQKLEIDLLKSSKEELNNSLKATTQILEELKKTKMDNLKYVNQLKKENERAQGKMKLLIKSCKQLEEEKEILQKELSQLQAAQEKQKTGTVMDTKVDELTTEIKELKETLEEKTKEADEYLDKYCSLLISHEKLEKAKEMLETQVAHLCSQQSKQDSRGSPLLGPVVPGPSPIPSVTEKRLSSGQNKASGKRQRSSGIWENGRGPTPATPESFSKKSKKAVMSGIHPAEDTEGTEFEPEGLPEVVKKGFADIPTGKTSPYILRRTTMATRTSPRLAAQKLALSPLSLGKENLAESSKPTAGGSRSQKVKVAQRSPVDSGTILREPTTKSVPVNNLPERSPTDSPREGLRVKRGRLVPSPKAGLESNGSENCKVQ.

Positions 1-481 are interaction with SNAP25 and required for localization to the cytoplasm; the sequence is MSWALEEWKE…IKENELRRSM (481 aa). Residues 13–131 are a coiled coil; it reads PTRALQKIQE…KSELERSQQA (119 aa). Ser-106 carries the phosphoserine modification. Phosphothreonine is present on residues Thr-144, Thr-151, and Thr-154. Position 158 is a phosphotyrosine (Tyr-158). Over residues 211–235 the composition is skewed to polar residues; sequence QASSSVFSWQQEKTPSHLSSNSQRT. A disordered region spans residues 211–236; that stretch reads QASSSVFSWQQEKTPSHLSSNSQRTP. Phosphoserine is present on residues Ser-242 and Ser-276. A coiled-coil region spans residues 280–685; the sequence is LDQLKAQNQE…SVEIRNLHNV (406 aa). Phosphoserine occurs at positions 773, 783, 821, 834, 838, and 876. Coiled-coil stretches lie at residues 899 to 989 and 1196 to 1244; these read VAET…LNQE and LEVK…IRGD. 3 positions are modified to phosphoserine: Ser-1248, Ser-1255, and Ser-1259. A coiled-coil region spans residues 1549-1646; that stretch reads VEELESLCEV…ELEVARLQLQ (98 aa). 3 positions are modified to phosphoserine: Ser-1651, Ser-1652, and Ser-1654. 2 disordered regions span residues 1667-1690 and 1710-1746; these read RNES…KHDV and TETG…SECI. Over residues 1669–1690 the composition is skewed to basic and acidic residues; sequence ESCDISKEHTSETTERTPKHDV. Ser-1726 carries the post-translational modification Phosphoserine. Thr-1862 carries the post-translational modification Phosphothreonine. Ser-1868 and Ser-1892 each carry phosphoserine. Coiled-coil stretches lie at residues 1890–2078 and 2107–2891; these read NDSW…LQAR and LSST…LCSQ. The tract at residues 2026-2351 is interaction with NDE1 and NDEL1; the sequence is LLKDKTHLQE…ERELEIARTN (326 aa). Tandem repeats lie at residues 2111–2290 and 2293–2472. The interval 2111–2472 is 2 X 177 AA tandem repeats; that stretch reads QEEVHQLRRG…ACKAKEQNLS (362 aa). The interval 2392 to 2829 is sufficient for self-association; sequence SEKENLTNEL…QAAQEKQKTG (438 aa). Positions 2392 to 3017 are sufficient for centromere localization; it reads SEKENLTNEL…ATRTSPRLAA (626 aa). Phosphoserine occurs at positions 2416 and 2417. Lys-2779 carries the N6-acetyllysine modification. The sufficient for nuclear localization stretch occupies residues 2831-3017; it reads VMDTKVDELT…ATRTSPRLAA (187 aa). The tract at residues 2891-2977 is disordered; the sequence is QQSKQDSRGS…AEDTEGTEFE (87 aa). A phosphoserine mark is found at Ser-2900, Ser-2911, Ser-2922, and Ser-2936. The Nuclear localization signal signature appears at 2919–2936; that stretch reads KRLSSGQNKASGKRQRSS. Thr-2949 is subject to Phosphothreonine. A phosphoserine mark is found at Ser-2952, Ser-2998, Ser-3023, and Ser-3026. The disordered stretch occupies residues 3024 to 3114; sequence PLSLGKENLA…SNGSENCKVQ (91 aa). A compositionally biased stretch (polar residues) spans 3033-3045; it reads AESSKPTAGGSRS. Residues Ser-3054, Ser-3079, and Ser-3083 each carry the phosphoserine modification. The span at 3079–3089 shows a compositional bias: basic and acidic residues; sequence SPTDSPREGLR. Residues 3105–3114 show a composition bias toward polar residues; it reads SNGSENCKVQ. Residue Cys-3111 is modified to Cysteine methyl ester. The S-farnesyl cysteine moiety is linked to residue Cys-3111. Positions 3112–3114 are cleaved as a propeptide — removed in mature form; it reads KVQ.

It belongs to the centromere protein F family. As to quaternary structure, interacts with and STX4 (via C-terminus). Interacts (via N-terminus) with RBL1, RBL2 and SNAP25. Self-associates. Interacts with CENP-E and BUBR1 (via C-terminus). Interacts (via C-terminus) with NDE1, NDEL1 and RB1. In terms of processing, hyperphosphorylated during mitosis.

The protein localises to the cytoplasm. It is found in the perinuclear region. Its subcellular location is the nucleus matrix. The protein resides in the chromosome. It localises to the centromere. The protein localises to the kinetochore. It is found in the cytoskeleton. Its subcellular location is the spindle. Required for kinetochore function and chromosome segregation in mitosis. Required for kinetochore localization of dynein, LIS1, NDE1 and NDEL1. Regulates recycling of the plasma membrane by acting as a link between recycling vesicles and the microtubule network though its association with STX4 and SNAP25. Acts as a potential inhibitor of pocket protein-mediated cellular processes during development by regulating the activity of RB proteins during cell division and proliferation. May play a regulatory or permissive role in the normal embryonic cardiomyocyte cell cycle and in promoting continued mitosis in transformed, abnormally dividing neonatal cardiomyocytes. Interaction with RB directs embryonic stem cells toward a cardiac lineage. Involved in the regulation of DNA synthesis and hence cell cycle progression, via its C-terminus. Has a potential role regulating skeletal myogenesis and in cell differentiation in embryogenesis. Involved in dendritic cell regulation of T-cell immunity against chlamydia. This chain is Centromere protein F (CENPF), found in Homo sapiens (Human).